The chain runs to 289 residues: Energy-coupling factor transporter ATP-binding protein EcfA2 (289 aa).

The 245-residue stretch at 7–251 (IILDNVSYTY…IELLTKIEID (245 aa)) folds into the ABC transporter domain. Position 44-51 (44-51 (GTTGSGKS)) interacts with ATP.

It belongs to the ABC transporter superfamily. Energy-coupling factor EcfA family. As to quaternary structure, forms a stable energy-coupling factor (ECF) transporter complex composed of 2 membrane-embedded substrate-binding proteins (S component), 2 ATP-binding proteins (A component) and 2 transmembrane proteins (T component).

The protein localises to the cell membrane. ATP-binding (A) component of a common energy-coupling factor (ECF) ABC-transporter complex. Unlike classic ABC transporters this ECF transporter provides the energy necessary to transport a number of different substrates. The chain is Energy-coupling factor transporter ATP-binding protein EcfA2 from Mycoplasma capricolum subsp. capricolum (strain California kid / ATCC 27343 / NCTC 10154).